A 180-amino-acid polypeptide reads, in one-letter code: Large ribosomal subunit protein uL10 (180 aa).

It belongs to the universal ribosomal protein uL10 family. As to quaternary structure, part of the ribosomal stalk of the 50S ribosomal subunit. The N-terminus interacts with L11 and the large rRNA to form the base of the stalk. The C-terminus forms an elongated spine to which L12 dimers bind in a sequential fashion forming a multimeric L10(L12)X complex.

Functionally, forms part of the ribosomal stalk, playing a central role in the interaction of the ribosome with GTP-bound translation factors. The protein is Large ribosomal subunit protein uL10 (rplJ) of Treponema pallidum (strain Nichols).